The following is a 424-amino-acid chain: Satellite RNA 48 kDa protein (424 aa).

Positions 51–83 (PRDGGGRKRKADGSQGRPSNNPGRPSRKWTEKT) are disordered.

This sequence belongs to the nepovirus satellite RNA 48 kDa protein family.

This chain is Satellite RNA 48 kDa protein, found in Tomato black ring virus (strain L) (TBRV).